Here is a 422-residue protein sequence, read N- to C-terminus: Adhesin YadA (422 aa).

A signal peptide spans 1–25; that stretch reads MTKDFKISVSAALISALFSSPYAFA. A surface exposed passenger domain region spans residues 26-330; it reads NNDEVHFTAV…KKAIRESNQY (305 aa). The stretch at 206–236 forms a coiled coil; the sequence is VNVAQLKKEIEKTQVNANKKSAEVLGIANNY. An outer membrane translocation of the passenger domain region spans residues 331–368; sequence TDHKFRQLDNRLDKLDTRVDKGLASSAALNSLFQPYGV. The next 4 beta stranded transmembrane spans lie at 369–379, 383–394, 401–407, and 411–422; these read GKVNFTAGVGG, SQALAIGSGYRV, KAGVAYA, and DVMYNASFNIEW. Residues 369-422 form a translocator domain region; that stretch reads GKVNFTAGVGGYRSSQALAIGSGYRVNESVALKAGVAYAGSSDVMYNASFNIEW.

The protein belongs to the autotransporter-2 (AT-2) (TC 1.B.40) family. In terms of assembly, homotrimer; trimers are very stable, not disrupted by heating at 95 degrees Celsius for 10 minutes in SDS sample buffer.

Its subcellular location is the cell surface. It localises to the cell outer membrane. In terms of biological role, collagen-binding outer membrane protein forming a fibrillar matrix on the bacterial cell surface and phagocytosis resistance. Promotes initial attachment and invasion of eukaryotic cells. Also protects the bacteria by being responsible for agglutination, serum resistance and complement inactivation. Gly-389 plays an important role in this protein; replacing it with increasingly large polar residues decreases expression levels and trimer stability. Residues larger than Ser (Thr, Asn or His) significantly decrease serume resistance and bacterial autoagglution without affecting adhesion to host cells or host cell cytokine production. In Yersinia enterocolitica serotype O:8 / biotype 1B (strain NCTC 13174 / 8081), this protein is Adhesin YadA.